The following is a 420-amino-acid chain: Serine--tRNA ligase (420 aa).

229–231 provides a ligand contact to L-serine; that stretch reads TAE. Position 260–262 (260–262) interacts with ATP; the sequence is RSE. An L-serine-binding site is contributed by E283. Residue 347-350 participates in ATP binding; that stretch reads EISS. Position 381 (S381) interacts with L-serine.

Belongs to the class-II aminoacyl-tRNA synthetase family. Type-1 seryl-tRNA synthetase subfamily. In terms of assembly, homodimer. The tRNA molecule binds across the dimer.

The protein localises to the cytoplasm. It carries out the reaction tRNA(Ser) + L-serine + ATP = L-seryl-tRNA(Ser) + AMP + diphosphate + H(+). The catalysed reaction is tRNA(Sec) + L-serine + ATP = L-seryl-tRNA(Sec) + AMP + diphosphate + H(+). It functions in the pathway aminoacyl-tRNA biosynthesis; selenocysteinyl-tRNA(Sec) biosynthesis; L-seryl-tRNA(Sec) from L-serine and tRNA(Sec): step 1/1. Catalyzes the attachment of serine to tRNA(Ser). Is also able to aminoacylate tRNA(Sec) with serine, to form the misacylated tRNA L-seryl-tRNA(Sec), which will be further converted into selenocysteinyl-tRNA(Sec). This chain is Serine--tRNA ligase, found in Gluconobacter oxydans (strain 621H) (Gluconobacter suboxydans).